A 545-amino-acid polypeptide reads, in one-letter code: CTP synthase (545 aa).

The interval 1–266 is amidoligase domain; the sequence is MTHFIFVTGG…DDLICERFGF (266 aa). S13 serves as a coordination point for CTP. Residue S13 coordinates UTP. Residues 14–19 and D71 contribute to the ATP site; that span reads SLGKGI. Positions 71 and 140 each coordinate Mg(2+). CTP is bound by residues 147-149, 187-192, and K223; these read DIE and KTKPTQ. Residues 187 to 192 and K223 contribute to the UTP site; that span reads KTKPTQ. 239–241 is an ATP binding site; that stretch reads KDA. The Glutamine amidotransferase type-1 domain maps to 292-543; the sequence is RVAMVGKYVE…IDAAKTQHQK (252 aa). G353 is an L-glutamine binding site. Catalysis depends on C380, which acts as the Nucleophile; for glutamine hydrolysis. L-glutamine contacts are provided by residues 381–384, E404, and R471; that span reads LGMQ. Active-site residues include H516 and E518.

It belongs to the CTP synthase family. Homotetramer.

The catalysed reaction is UTP + L-glutamine + ATP + H2O = CTP + L-glutamate + ADP + phosphate + 2 H(+). It carries out the reaction L-glutamine + H2O = L-glutamate + NH4(+). It catalyses the reaction UTP + NH4(+) + ATP = CTP + ADP + phosphate + 2 H(+). The protein operates within pyrimidine metabolism; CTP biosynthesis via de novo pathway; CTP from UDP: step 2/2. Allosterically activated by GTP, when glutamine is the substrate; GTP has no effect on the reaction when ammonia is the substrate. The allosteric effector GTP functions by stabilizing the protein conformation that binds the tetrahedral intermediate(s) formed during glutamine hydrolysis. Inhibited by the product CTP, via allosteric rather than competitive inhibition. Functionally, catalyzes the ATP-dependent amination of UTP to CTP with either L-glutamine or ammonia as the source of nitrogen. Regulates intracellular CTP levels through interactions with the four ribonucleotide triphosphates. The sequence is that of CTP synthase from Acinetobacter baumannii (strain ACICU).